The following is a 274-amino-acid chain: NH(3)-dependent NAD(+) synthetase (274 aa).

ATP is bound at residue 46-53 (GISGGQDS). Position 52 (Asp52) interacts with Mg(2+). Residue Arg140 coordinates deamido-NAD(+). Residue Thr160 coordinates ATP. Glu165 contacts Mg(2+). The deamido-NAD(+) site is built by Lys173 and Asp180. Positions 189 and 211 each coordinate ATP. 260–261 (HK) contacts deamido-NAD(+).

It belongs to the NAD synthetase family. Homodimer.

The enzyme catalyses deamido-NAD(+) + NH4(+) + ATP = AMP + diphosphate + NAD(+) + H(+). Its pathway is cofactor biosynthesis; NAD(+) biosynthesis; NAD(+) from deamido-NAD(+) (ammonia route): step 1/1. In terms of biological role, catalyzes the ATP-dependent amidation of deamido-NAD to form NAD. Uses ammonia as a nitrogen source. This is NH(3)-dependent NAD(+) synthetase from Streptococcus suis (strain 05ZYH33).